A 518-amino-acid polypeptide reads, in one-letter code: Glycerophosphoinositol transporter 1 (518 aa).

Residues 1-44 lie on the Cytoplasmic side of the membrane; it reads MEDKDITSVNEKEVNENTNPRIIKYDAERRATRTETSKKDKWKN. The helical transmembrane segment at 45–65 threads the bilayer; that stretch reads IVTIIASGFALISDGYVNGSM. Topologically, residues 66–91 are extracellular; the sequence is SMLNKVFVMEYGKKNYSSKVSTRVSN. N-linked (GlcNAc...) asparagine glycosylation occurs at asparagine 80. A helical transmembrane segment spans residues 92 to 112; sequence AALVGIIFGQFFMGIAADYYS. Over 113 to 114 the chain is Cytoplasmic; sequence RK. Residues 115–136 traverse the membrane as a helical segment; sequence SCILVATAILVIGSALCAASHG. The Extracellular portion of the chain corresponds to 137–138; the sequence is TT. Residues 139 to 159 form a helical membrane-spanning segment; that stretch reads VPGMFWMLTVMRGLVGIGVGA. Over 160 to 184 the chain is Cytoplasmic; that stretch reads EYPTSTLSANESANEYTTTKRGGIL. Residues 185–205 traverse the membrane as a helical segment; it reads VMVTNLPLAFGGPFATIIFLI. Over 206 to 216 the chain is Extracellular; sequence VYKICSGTKHL. Residues 217 to 237 form a helical membrane-spanning segment; sequence EAIWRTVFAIGCFWPLSVFYF. Residues 238 to 268 are Cytoplasmic-facing; that stretch reads RWKTATTEVYEKGRIKRNIPYFLALKFYWKR. The chain crosses the membrane as a helical span at residues 269–289; sequence LLGTCGTWFMYDFVTFPNGIF. The Extracellular portion of the chain corresponds to 290–306; it reads SSTIISSVIKDQNDLVK. Residues 307–327 traverse the membrane as a helical segment; that stretch reads VAEWNLLLGVLAVLGVPIGAY. The Cytoplasmic portion of the chain corresponds to 328–335; the sequence is LSDRIGRK. The chain crosses the membrane as a helical span at residues 336-356; sequence YTLMFGFSGYIIFGLIIGCAY. Over 357–360 the chain is Extracellular; that stretch reads DQLK. Residues 361–381 form a helical membrane-spanning segment; it reads KITPLFIIFYAFMNMLGNAGP. Over 382–399 the chain is Cytoplasmic; that stretch reads GDMLGVISSEASATAVRG. Residues 400 to 420 form a helical membrane-spanning segment; sequence VFYGLSAVTGKIGSVVGVECF. Over 421-430 the chain is Extracellular; sequence QPIRDNLGAR. Residues 431–451 form a helical membrane-spanning segment; the sequence is WTFIIAAICGLIGIIITYFFV. Over 452-518 the chain is Cytoplasmic; it reads PHSLESDLMK…IISVRQVDQS (67 aa).

Belongs to the major facilitator superfamily. Sugar transporter (TC 2.A.1.1) family.

The protein resides in the cell membrane. The enzyme catalyses sn-glycerol 3-phosphocholine(out) = sn-glycerol 3-phosphocholine(in). The catalysed reaction is sn-glycero-3-phospho-1D-myo-inositol(out) = sn-glycero-3-phospho-1D-myo-inositol(in). Glycerophosphodiester transporter that mediates uptake of both glycerophosphoinositol (GroPIns) and glycerophosphocholine (GroPCho) as sources of the nutrients inositol and phosphate. The chain is Glycerophosphoinositol transporter 1 from Saccharomyces cerevisiae (strain ATCC 204508 / S288c) (Baker's yeast).